Consider the following 336-residue polypeptide: tRNA N6-adenosine threonylcarbamoyltransferase (336 aa).

Residues histidine 112 and histidine 116 each contribute to the Fe cation site. Substrate-binding positions include 136–140 (LVSGG), aspartate 169, glycine 182, and asparagine 276. Aspartate 304 contributes to the Fe cation binding site.

Belongs to the KAE1 / TsaD family. It depends on Fe(2+) as a cofactor.

The protein localises to the cytoplasm. It catalyses the reaction L-threonylcarbamoyladenylate + adenosine(37) in tRNA = N(6)-L-threonylcarbamoyladenosine(37) in tRNA + AMP + H(+). Required for the formation of a threonylcarbamoyl group on adenosine at position 37 (t(6)A37) in tRNAs that read codons beginning with adenine. Is involved in the transfer of the threonylcarbamoyl moiety of threonylcarbamoyl-AMP (TC-AMP) to the N6 group of A37, together with TsaE and TsaB. TsaD likely plays a direct catalytic role in this reaction. This Francisella tularensis subsp. holarctica (strain FTNF002-00 / FTA) protein is tRNA N6-adenosine threonylcarbamoyltransferase.